We begin with the raw amino-acid sequence, 33 residues long: Photosystem II reaction center protein Psb30 (33 aa).

Residues 5–25 (LIAQLTFLTSIIVSGPLVIAL) form a helical membrane-spanning segment.

It belongs to the Psb30/Ycf12 family. As to quaternary structure, PSII is composed of 1 copy each of membrane proteins PsbA, PsbB, PsbC, PsbD, PsbE, PsbF, PsbH, PsbI, PsbJ, PsbK, PsbL, PsbM, PsbT, PsbX, PsbY, PsbZ, Psb30/Ycf12, peripheral proteins of the oxygen-evolving complex and a large number of cofactors. It forms dimeric complexes.

The protein localises to the plastid. The protein resides in the chloroplast thylakoid membrane. Functionally, a core subunit of photosystem II (PSII), probably helps stabilize the reaction center. This is Photosystem II reaction center protein Psb30 from Psilotum nudum (Whisk fern).